A 678-amino-acid chain; its full sequence is Penicillin-binding protein activator LpoA (678 aa).

Residues 1–26 (MVPSTFSRLKAARCLPVVLAALIFAG) form the signal peptide. Cys-27 is lipidated: N-palmitoyl cysteine. Residue Cys-27 is the site of S-diacylglycerol cysteine attachment. 2 disordered regions span residues 304-338 (AEQP…SVPV) and 495-530 (IALT…QFTN). The span at 513–529 (TTNNPTLQTTPTDDQFT) shows a compositional bias: low complexity.

It belongs to the LpoA family. In terms of assembly, interacts with PBP1a.

The protein resides in the cell outer membrane. Functionally, regulator of peptidoglycan synthesis that is essential for the function of penicillin-binding protein 1A (PBP1a). The sequence is that of Penicillin-binding protein activator LpoA from Escherichia coli O6:H1 (strain CFT073 / ATCC 700928 / UPEC).